The primary structure comprises 435 residues: UPF0761 membrane protein mma_2179 (435 aa).

6 helical membrane-spanning segments follow: residues 45–65 (VLAL…FPLF), 103–123 (LSAF…LMID), 142–162 (ILVY…SMTF), 177–197 (VPFV…MVAF), 208–228 (LVEW…FEIV), and 252–272 (FPIF…GAVV).

The protein belongs to the UPF0761 family.

The protein localises to the cell inner membrane. In Janthinobacterium sp. (strain Marseille) (Minibacterium massiliensis), this protein is UPF0761 membrane protein mma_2179.